Here is a 201-residue protein sequence, read N- to C-terminus: Small ribosomal subunit protein uS10m (201 aa).

The protein belongs to the universal ribosomal protein uS10 family. In terms of assembly, component of the mitochondrial ribosome small subunit (28S) which comprises a 12S rRNA and about 30 distinct proteins.

It is found in the mitochondrion. The polypeptide is Small ribosomal subunit protein uS10m (MRPS10) (Pongo abelii (Sumatran orangutan)).